We begin with the raw amino-acid sequence, 98 residues long: NADH-ubiquinone oxidoreductase chain 4L (98 aa).

The next 3 membrane-spanning stretches (helical) occupy residues 1–21 (MSLI…GLLM), 29–49 (SLLC…MMVL), and 61–81 (IILL…LVMI).

It belongs to the complex I subunit 4L family. As to quaternary structure, core subunit of respiratory chain NADH dehydrogenase (Complex I) which is composed of 45 different subunits.

It localises to the mitochondrion inner membrane. It carries out the reaction a ubiquinone + NADH + 5 H(+)(in) = a ubiquinol + NAD(+) + 4 H(+)(out). In terms of biological role, core subunit of the mitochondrial membrane respiratory chain NADH dehydrogenase (Complex I) which catalyzes electron transfer from NADH through the respiratory chain, using ubiquinone as an electron acceptor. Part of the enzyme membrane arm which is embedded in the lipid bilayer and involved in proton translocation. The polypeptide is NADH-ubiquinone oxidoreductase chain 4L (MT-ND4L) (Ceratotherium simum (White rhinoceros)).